The sequence spans 740 residues: Ribosomal protein S6 kinase alpha-3 (740 aa).

Residues 1-38 are disordered; that stretch reads MPLAQLADPWQKMAVESPSDSAENGQQIMDEPMGEEEI. A compositionally biased stretch (polar residues) spans 18–27; that stretch reads PSDSAENGQQ. A Protein kinase 1 domain is found at 68–327; it reads FELLKVLGQG…VEEIKRHSFF (260 aa). Residues 74–82 and Lys100 each bind ATP; that span reads LGQGSFGKV. Asp193 functions as the Proton acceptor in the catalytic mechanism. Ser227 is modified (phosphoserine; by PDPK1). Residues 328 to 397 enclose the AGC-kinase C-terminal domain; that stretch reads STIDWNKLYR…VAITSDDESQ (70 aa). Thr365 is modified (phosphothreonine). Ser369 and Ser375 each carry phosphoserine. Ser386 bears the Phosphoserine; by autocatalysis and MAPKAPK2 mark. Ser415 carries the post-translational modification Phosphoserine. The Protein kinase 2 domain maps to 422 to 679; it reads YEVKEDIGVG…AALVLRHPWI (258 aa). ATP is bound by residues 428–436 and Lys451; that span reads IGVGSYSVC. The residue at position 529 (Tyr529) is a Phosphotyrosine; by FGFR3. Asp539 acts as the Proton acceptor in catalysis. 2 positions are modified to phosphoserine: Ser556 and Ser715.

It belongs to the protein kinase superfamily. AGC Ser/Thr protein kinase family. S6 kinase subfamily. Forms a complex with either MAPK1/ERK2 or MAPK3/ERK1 in quiescent cells. Transiently dissociates following mitogenic stimulation. Interacts with NFATC4, ETV1/ER81 and FGFR1. Mg(2+) serves as cofactor. Post-translationally, activated by phosphorylation at Ser-227 by PDPK1. Autophosphorylated on Ser-386, as part of the activation process. May be phosphorylated at Thr-365 and Ser-369 by MAPK1/ERK2 and MAPK3/ERK1. Can also be activated via phosphorylation at Ser-386 by MAPKAPK2. N-terminal myristoylation results in an activated kinase in the absence of added growth factors. Expressed in many tissues, highest levels in skeletal muscle.

It is found in the nucleus. Its subcellular location is the cytoplasm. It carries out the reaction L-seryl-[protein] + ATP = O-phospho-L-seryl-[protein] + ADP + H(+). The enzyme catalyses L-threonyl-[protein] + ATP = O-phospho-L-threonyl-[protein] + ADP + H(+). Upon extracellular signal or mitogen stimulation, phosphorylated at Thr-577 in the C-terminal kinase domain (CTKD) by MAPK1/ERK2 and MAPK3/ERK1. The activated CTKD then autophosphorylates Ser-386, allowing binding of PDPK1, which in turn phosphorylates Ser-227 in the N-terminal kinase domain (NTDK) leading to the full activation of the protein and subsequent phosphorylation of the substrates by the NTKD. Functionally, serine/threonine-protein kinase that acts downstream of ERK (MAPK1/ERK2 and MAPK3/ERK1) signaling and mediates mitogenic and stress-induced activation of the transcription factors CREB1, ETV1/ER81 and NR4A1/NUR77, regulates translation through RPS6 and EIF4B phosphorylation, and mediates cellular proliferation, survival, and differentiation by modulating mTOR signaling and repressing pro-apoptotic function of BAD and DAPK1. In fibroblast, is required for EGF-stimulated phosphorylation of CREB1 and histone H3 at 'Ser-10', which results in the subsequent transcriptional activation of several immediate-early genes. In response to mitogenic stimulation (EGF and PMA), phosphorylates and activates NR4A1/NUR77 and ETV1/ER81 transcription factors and the cofactor CREBBP. Upon insulin-derived signal, acts indirectly on the transcription regulation of several genes by phosphorylating GSK3B at 'Ser-9' and inhibiting its activity. Phosphorylates RPS6 in response to serum or EGF via an mTOR-independent mechanism and promotes translation initiation by facilitating assembly of the preinitiation complex. In response to insulin, phosphorylates EIF4B, enhancing EIF4B affinity for the EIF3 complex and stimulating cap-dependent translation. Is involved in the mTOR nutrient-sensing pathway by directly phosphorylating TSC2 at 'Ser-1798', which potently inhibits TSC2 ability to suppress mTOR signaling, and mediates phosphorylation of RPTOR, which regulates mTORC1 activity and may promote rapamycin-sensitive signaling independently of the PI3K/AKT pathway. Mediates cell survival by phosphorylating the pro-apoptotic proteins BAD and DAPK1 and suppressing their pro-apoptotic function. Promotes the survival of hepatic stellate cells by phosphorylating CEBPB in response to the hepatotoxin carbon tetrachloride (CCl4). Is involved in cell cycle regulation by phosphorylating the CDK inhibitor CDKN1B, which promotes CDKN1B association with 14-3-3 proteins and prevents its translocation to the nucleus and inhibition of G1 progression. In LPS-stimulated dendritic cells, is involved in TLR4-induced macropinocytosis, and in myeloma cells, acts as effector of FGFR3-mediated transformation signaling, after direct phosphorylation at Tyr-529 by FGFR3. Negatively regulates EGF-induced MAPK1/3 phosphorylation via phosphorylation of SOS1. Phosphorylates SOS1 at 'Ser-1134' and 'Ser-1161' that create YWHAB and YWHAE binding sites and which contribute to the negative regulation of MAPK1/3 phosphorylation. Phosphorylates EPHA2 at 'Ser-897', the RPS6KA-EPHA2 signaling pathway controls cell migration. Acts as a regulator of osteoblast differentiation by mediating phosphorylation of ATF4, thereby promoting ATF4 transactivation activity. This is Ribosomal protein S6 kinase alpha-3 (RPS6KA3) from Homo sapiens (Human).